Reading from the N-terminus, the 179-residue chain is Large ribosomal subunit protein uL6 (179 aa).

The protein belongs to the universal ribosomal protein uL6 family. In terms of assembly, part of the 50S ribosomal subunit.

Its function is as follows. This protein binds to the 23S rRNA, and is important in its secondary structure. It is located near the subunit interface in the base of the L7/L12 stalk, and near the tRNA binding site of the peptidyltransferase center. This Spiroplasma kunkelii protein is Large ribosomal subunit protein uL6.